The primary structure comprises 503 residues: SWI/SNF and RSC complexes subunit ssr2 (503 aa).

The SWIRM domain maps to 18–115 (IIVPSYAGWF…YQIDPETRPA (98 aa)). S175 bears the Phosphoserine mark. The ZZ-type; degenerate zinc finger occupies 188–242 (RVDKVCFTCGVNCSQTWYHNLKNKKYDICPNCYKQGRFSSSFNSSDFLCMDAIDF). C193, C196, C216, and C219 together coordinate Zn(2+). In terms of domain architecture, SANT spans 245 to 296 (DEEKPWSNQETLLLLEAIETYGDDWNQIALHVGSRTKEQCLIHFLQIPIEDP). Position 306 is a phosphoserine (S306).

This sequence belongs to the SMARCC family. As to quaternary structure, component of the RSC complex composed of at least arp9, arp42, rsc1, rsc4, rsc7, rsc9, rsc58, sfh1, snf21, ssr1, ssr2, ssr3 and ssr4. The complex interacts with histone and histone variant components of centromeric chromatin. Component of the SWI/SNF global transcription activator complex composed of at least arp9, arp42, snf5, snf22, snf30, sbf59, sol1, ssr1, ssr2, ssr3, ssr4 and tfg3.

It localises to the cytoplasm. Its subcellular location is the nucleus. Functionally, component of the chromatin structure remodeling complex (RSC), which is involved in transcription regulation and nucleosome positioning. Controls particularly membrane and organelle development genes. Part of the SWI/SNF complex, an ATP-dependent chromatin remodeling complex, required for the positive and negative regulation of gene expression of a large number of genes. It changes chromatin structure by altering DNA-histone contacts within a nucleosome, leading eventually to a change in nucleosome position, thus facilitating or repressing binding of gene-specific transcription factors. This Schizosaccharomyces pombe (strain 972 / ATCC 24843) (Fission yeast) protein is SWI/SNF and RSC complexes subunit ssr2 (ssr2).